The sequence spans 502 residues: MLDLLQAGGSVLGQAMEQVTGGNLASMLLIACAFTLSLVYLFRLAVGHLAPPLPTGAKSPPYIVSPIPFLGHAIAFGKSPIEFLEDAYEKYGPVFSFTMVGKTFTYLLGSEAAALLFNSKNEDLNAEEVYSRLTTPVFGKGVAYDVPNTVFLEQKKMLKSGLNIAHFRQHVSIIEKETKEYFKSWGESGEKNLFEALSELIILTASHCLHGKEIRSQLNEKVAQLYADLDGGFSHAAWLLPGWLPLPSFRRRDRAHREIKNIFYKAIQKRRESGEKIDDILQTLLESTYKDGRPLTDDEVAGMLIGLLLAGQHTSSTTSAWMGFFLARDKTLQEKCFLEQKTVCGENLPPLTYDQLKDLNLLDRCIKETLRLRPPIMTMMRLAKTPLTVAGYTIPPGHQVCVSPTVNQRLKDSWVERLDFNPDRYLEDSPASGEKFAYVPFGAGRHRCIGENFAYVQIKTIWSTMLRLYEFDLIDGYFPTVNYTTMIHTPEKPIIRYKRRSK.

The helical transmembrane segment at 22–42 threads the bilayer; the sequence is GNLASMLLIACAFTLSLVYLF. C448 provides a ligand contact to heme.

The protein belongs to the cytochrome P450 family. Requires heme as cofactor. Post-translationally, ubiquitinated by MARCHF6, leading to proteasomal degradation.

It localises to the endoplasmic reticulum membrane. The protein resides in the microsome membrane. It carries out the reaction a 14alpha-methyl steroid + 3 reduced [NADPH--hemoprotein reductase] + 3 O2 = a Delta(14) steroid + formate + 3 oxidized [NADPH--hemoprotein reductase] + 4 H2O + 4 H(+). The catalysed reaction is lanosterol + 3 reduced [NADPH--hemoprotein reductase] + 3 O2 = 4,4-dimethyl-5alpha-cholesta-8,14,24-trien-3beta-ol + formate + 3 oxidized [NADPH--hemoprotein reductase] + 4 H2O + 4 H(+). The enzyme catalyses 24,25-dihydrolanosterol + 3 reduced [NADPH--hemoprotein reductase] + 3 O2 = 4,4-dimethyl-8,14-cholestadien-3beta-ol + formate + 3 oxidized [NADPH--hemoprotein reductase] + 4 H2O + 4 H(+). It catalyses the reaction a 14alpha-methyl steroid + reduced [NADPH--hemoprotein reductase] + O2 = a 14alpha-hydroxymethyl steroid + oxidized [NADPH--hemoprotein reductase] + H2O + H(+). It carries out the reaction a 14alpha-hydroxymethyl steroid + reduced [NADPH--hemoprotein reductase] + O2 = a 14alpha-formyl steroid + oxidized [NADPH--hemoprotein reductase] + 2 H2O + H(+). The catalysed reaction is a 14alpha-formyl steroid + reduced [NADPH--hemoprotein reductase] + O2 = a Delta(14) steroid + formate + oxidized [NADPH--hemoprotein reductase] + H2O + 2 H(+). The enzyme catalyses lanosterol + reduced [NADPH--hemoprotein reductase] + O2 = 32-hydroxylanosterol + oxidized [NADPH--hemoprotein reductase] + H2O + H(+). It catalyses the reaction 32-hydroxylanosterol + reduced [NADPH--hemoprotein reductase] + O2 = 32-oxolanosterol + oxidized [NADPH--hemoprotein reductase] + 2 H2O + H(+). It carries out the reaction 32-oxolanosterol + reduced [NADPH--hemoprotein reductase] + O2 = 4,4-dimethyl-5alpha-cholesta-8,14,24-trien-3beta-ol + formate + oxidized [NADPH--hemoprotein reductase] + H2O + 2 H(+). The catalysed reaction is 24,25-dihydrolanosterol + reduced [NADPH--hemoprotein reductase] + O2 = 32-hydroxy-24,25-dihydrolanosterol + oxidized [NADPH--hemoprotein reductase] + H2O + H(+). The enzyme catalyses 32-hydroxy-24,25-dihydrolanosterol + reduced [NADPH--hemoprotein reductase] + O2 = 32-oxo-24,25-dihydrolanosterol + oxidized [NADPH--hemoprotein reductase] + 2 H2O + H(+). It catalyses the reaction 32-oxo-24,25-dihydrolanosterol + reduced [NADPH--hemoprotein reductase] + O2 = 4,4-dimethyl-8,14-cholestadien-3beta-ol + formate + oxidized [NADPH--hemoprotein reductase] + H2O + 2 H(+). Its pathway is steroid biosynthesis; zymosterol biosynthesis; zymosterol from lanosterol: step 1/6. Inhibited by azalanstat. Inhibited by azole antifungal agents ketoconazole, itraconazole and fluconazole. Sterol 14alpha-demethylase that plays a critical role in the cholesterol biosynthesis pathway, being cholesterol the major sterol component in mammalian membranes as well as a precursor for bile acid and steroid hormone synthesis. Cytochrome P450 monooxygenase that catalyzes the three-step oxidative removal of the 14alpha-methyl group (C-32) of sterols such as lanosterol (lanosta-8,24-dien-3beta-ol) and 24,25-dihydrolanosterol (DHL) in the form of formate, and converts the sterols to 4,4-dimethyl-5alpha-cholesta-8,14,24-trien-3beta-ol and 4,4-dimethyl-8,14-cholestadien-3beta-ol, respectively, which are intermediates of cholesterol biosynthesis. Can also demethylate substrates not intrinsic to mammals, such as eburicol (24-methylene-24,25-dihydrolanosterol), but at a lower rate than DHL. In Bos taurus (Bovine), this protein is Lanosterol 14-alpha demethylase.